A 32-amino-acid chain; its full sequence is U5-ctenitoxin-Pn1a (32 aa).

Cystine bridges form between cysteine 3–cysteine 16, cysteine 9–cysteine 21, and cysteine 15–cysteine 30.

Expressed by the venom gland.

The protein resides in the secreted. Its function is as follows. Blocks voltage-gated sodium channels (Nav). Causes tail erection, scratching and a reduction in mobility at a dose level of 1.40 mg/mouse. The chain is U5-ctenitoxin-Pn1a from Phoneutria nigriventer (Brazilian armed spider).